The chain runs to 648 residues: Threonine--tRNA ligase (648 aa).

In terms of domain architecture, TGS spans 1-63 (MTEINIEFPD…NENVKIEIVT (63 aa)). Positions 243 to 541 (DHRVIGNNLD…LIEMYKGAFP (299 aa)) are catalytic. Zn(2+)-binding residues include Cys-337, His-388, and His-518.

The protein belongs to the class-II aminoacyl-tRNA synthetase family. In terms of assembly, homodimer. Requires Zn(2+) as cofactor.

Its subcellular location is the cytoplasm. The catalysed reaction is tRNA(Thr) + L-threonine + ATP = L-threonyl-tRNA(Thr) + AMP + diphosphate + H(+). In terms of biological role, catalyzes the attachment of threonine to tRNA(Thr) in a two-step reaction: L-threonine is first activated by ATP to form Thr-AMP and then transferred to the acceptor end of tRNA(Thr). Also edits incorrectly charged L-seryl-tRNA(Thr). This Pediococcus pentosaceus (strain ATCC 25745 / CCUG 21536 / LMG 10740 / 183-1w) protein is Threonine--tRNA ligase.